A 267-amino-acid chain; its full sequence is Tryptophan synthase alpha chain (267 aa).

Active-site proton acceptor residues include Glu49 and Asp60.

The protein belongs to the TrpA family. In terms of assembly, tetramer of two alpha and two beta chains.

It catalyses the reaction (1S,2R)-1-C-(indol-3-yl)glycerol 3-phosphate + L-serine = D-glyceraldehyde 3-phosphate + L-tryptophan + H2O. It functions in the pathway amino-acid biosynthesis; L-tryptophan biosynthesis; L-tryptophan from chorismate: step 5/5. Its function is as follows. The alpha subunit is responsible for the aldol cleavage of indoleglycerol phosphate to indole and glyceraldehyde 3-phosphate. The polypeptide is Tryptophan synthase alpha chain (Citrifermentans bemidjiense (strain ATCC BAA-1014 / DSM 16622 / JCM 12645 / Bem) (Geobacter bemidjiensis)).